A 181-amino-acid chain; its full sequence is ADP-ribosylation factor-like protein 1 (181 aa).

The N-myristoyl glycine moiety is linked to residue glycine 2. GTP-binding positions include 24–31 (GLDGAGKT), 45–48 (TIPT), glycine 70, 126–129 (NKQD), and 160–161 (AT). Mg(2+) is bound by residues threonine 31 and threonine 48.

This sequence belongs to the small GTPase superfamily. Arf family. As to quaternary structure, the GTP-bound form interacts with GOLGA1. The GTP-bound form interacts with GOLGA4 and RGPD8. The GTP-bound form directly interacts with ARFIP2. Binds to SCOC, preferentially in its GTP-bound form. May interact with UNC119. Interacts with ARFIP1; this interaction directs ARFIP1 to the trans-Golgi membranes. Interacts with ARFGEF1 (via N-terminus). Detected in heart, liver, lung and liver (at protein level). Detected in fetal heart, lung, liver and kidney. Detected in adult heart, placenta, lung, liver, skeletal muscle, kidney and pancreas.

The protein localises to the golgi apparatus membrane. The protein resides in the golgi apparatus. It is found in the trans-Golgi network membrane. Its subcellular location is the membrane. GTP-binding protein that recruits several effectors, such as golgins, arfaptins and Arf-GEFs to the trans-Golgi network, and modulates their functions at the Golgi complex. Plays thereby a role in a wide range of fundamental cellular processes, including cell polarity, innate immunity, or protein secretion mediated by arfaptins, which were shown to play a role in maintaining insulin secretion from pancreatic beta cells. In Homo sapiens (Human), this protein is ADP-ribosylation factor-like protein 1 (ARL1).